We begin with the raw amino-acid sequence, 163 residues long: ATP synthase subunit b (163 aa).

The propeptide occupies 1-11 (MLWKANVWVLG). The helical transmembrane segment at 16–36 (GISGGTIIYQLLMFIILLALL) threads the bilayer.

The protein belongs to the ATPase B chain family. In terms of assembly, F-type ATPases have 2 components, F(1) - the catalytic core - and F(0) - the membrane proton channel. F(1) has five subunits: alpha(3), beta(3), gamma(1), delta(1), epsilon(1). F(0) has three main subunits: a(1), b(2) and c(10-14). The alpha and beta chains form an alternating ring which encloses part of the gamma chain. F(1) is attached to F(0) by a central stalk formed by the gamma and epsilon chains, while a peripheral stalk is formed by the delta and b chains.

It localises to the cell membrane. Functionally, f(1)F(0) ATP synthase produces ATP from ADP in the presence of a proton or sodium gradient. F-type ATPases consist of two structural domains, F(1) containing the extramembraneous catalytic core and F(0) containing the membrane proton channel, linked together by a central stalk and a peripheral stalk. During catalysis, ATP synthesis in the catalytic domain of F(1) is coupled via a rotary mechanism of the central stalk subunits to proton translocation. Component of the F(0) channel, it forms part of the peripheral stalk, linking F(1) to F(0). This is ATP synthase subunit b from Bacillus sp. (strain PS3).